The sequence spans 30 residues: Cyclotide hyen-D (30 aa).

A cross-link (cyclopeptide (Gly-Asn)) is located at residues 1-30 (GFPCGESCVYIPCFTAAIGCSCKSKVCYKN). Cystine bridges form between Cys4–Cys20, Cys8–Cys22, and Cys13–Cys27.

In terms of processing, this is a cyclic peptide. As to expression, detected in stems (at protein level).

In terms of biological role, probably participates in a plant defense mechanism. Has strong cytotoxic activity against HUVEC cells (LC(50)= 0.58 uM) and various cancer cells including HeLa (LC(50)= 0.48 uM), MCF-7 and K562. Also displays some hemolytic activity. Binds to and induces leakage in phospholipd membranes, particularly ones containing 1-palmitoyl-2-oleophosphatidylethanolamine (POPE). The protein is Cyclotide hyen-D of Pigea enneasperma (Spade flower).